The primary structure comprises 159 residues: Transcriptional repressor NrdR (159 aa).

A zinc finger lies at 3–34; sequence CPFCRHEDTQVVDSRVSEDGAAIRRRRRCSAC. The region spanning 49-139 is the ATP-cone domain; sequence PAVVKKDGSR…VYRRFEDVSE (91 aa).

The protein belongs to the NrdR family. It depends on Zn(2+) as a cofactor.

In terms of biological role, negatively regulates transcription of bacterial ribonucleotide reductase nrd genes and operons by binding to NrdR-boxes. This chain is Transcriptional repressor NrdR, found in Burkholderia multivorans (strain ATCC 17616 / 249).